The sequence spans 447 residues: GTPase Der (447 aa).

2 EngA-type G domains span residues 4–165 (QIIT…PEEE) and 180–357 (LQIV…KIWN). GTP-binding positions include 10-17 (GRPNVGKS), 57-61 (DTPGL), 119-122 (NKCE), 186-193 (GRPNAGKS), 233-237 (DTAGL), and 298-301 (NKWD). Residues 358 to 443 (KKITTSKLNE…PIRFIYVKTK (86 aa)) form the KH-like domain.

This sequence belongs to the TRAFAC class TrmE-Era-EngA-EngB-Septin-like GTPase superfamily. EngA (Der) GTPase family. In terms of assembly, associates with the 50S ribosomal subunit.

In terms of biological role, GTPase that plays an essential role in the late steps of ribosome biogenesis. The sequence is that of GTPase Der from Rickettsia conorii (strain ATCC VR-613 / Malish 7).